The chain runs to 335 residues: Beta-ketoacyl-[acyl-carrier-protein] synthase III (335 aa).

Catalysis depends on residues C118 and H259. Residues 260–264 (QANER) are ACP-binding. The active site involves N289.

It belongs to the thiolase-like superfamily. FabH family. Homodimer.

Its subcellular location is the cytoplasm. It carries out the reaction malonyl-[ACP] + acetyl-CoA + H(+) = 3-oxobutanoyl-[ACP] + CO2 + CoA. The protein operates within lipid metabolism; fatty acid biosynthesis. Its function is as follows. Catalyzes the condensation reaction of fatty acid synthesis by the addition to an acyl acceptor of two carbons from malonyl-ACP. Catalyzes the first condensation reaction which initiates fatty acid synthesis and may therefore play a role in governing the total rate of fatty acid production. Possesses both acetoacetyl-ACP synthase and acetyl transacylase activities. Its substrate specificity determines the biosynthesis of branched-chain and/or straight-chain of fatty acids. The chain is Beta-ketoacyl-[acyl-carrier-protein] synthase III from Chlamydia caviae (strain ATCC VR-813 / DSM 19441 / 03DC25 / GPIC) (Chlamydophila caviae).